A 237-amino-acid chain; its full sequence is Ribonuclease PH (237 aa).

Residues Arg-86 and 124 to 126 each bind phosphate; that span reads GTR.

This sequence belongs to the RNase PH family. As to quaternary structure, homohexameric ring arranged as a trimer of dimers.

It carries out the reaction tRNA(n+1) + phosphate = tRNA(n) + a ribonucleoside 5'-diphosphate. Functionally, phosphorolytic 3'-5' exoribonuclease that plays an important role in tRNA 3'-end maturation. Removes nucleotide residues following the 3'-CCA terminus of tRNAs; can also add nucleotides to the ends of RNA molecules by using nucleoside diphosphates as substrates, but this may not be physiologically important. Probably plays a role in initiation of 16S rRNA degradation (leading to ribosome degradation) during starvation. In Shewanella loihica (strain ATCC BAA-1088 / PV-4), this protein is Ribonuclease PH.